The chain runs to 308 residues: Ribosomal RNA small subunit methyltransferase H (308 aa).

S-adenosyl-L-methionine contacts are provided by residues 32-34, D51, F78, D99, and Q106; that span reads AGH.

It belongs to the methyltransferase superfamily. RsmH family.

Its subcellular location is the cytoplasm. It carries out the reaction cytidine(1402) in 16S rRNA + S-adenosyl-L-methionine = N(4)-methylcytidine(1402) in 16S rRNA + S-adenosyl-L-homocysteine + H(+). Specifically methylates the N4 position of cytidine in position 1402 (C1402) of 16S rRNA. The polypeptide is Ribosomal RNA small subunit methyltransferase H (Mesoplasma florum (strain ATCC 33453 / NBRC 100688 / NCTC 11704 / L1) (Acholeplasma florum)).